The primary structure comprises 263 residues: 3-methyl-2-oxobutanoate hydroxymethyltransferase (263 aa).

Residues D45 and D84 each coordinate Mg(2+). Residues 45–46 (DS), D84, and K112 contribute to the 3-methyl-2-oxobutanoate site. E114 is a Mg(2+) binding site. E181 serves as the catalytic Proton acceptor.

This sequence belongs to the PanB family. Homodecamer; pentamer of dimers. The cofactor is Mg(2+).

It is found in the cytoplasm. The enzyme catalyses 3-methyl-2-oxobutanoate + (6R)-5,10-methylene-5,6,7,8-tetrahydrofolate + H2O = 2-dehydropantoate + (6S)-5,6,7,8-tetrahydrofolate. It functions in the pathway cofactor biosynthesis; (R)-pantothenate biosynthesis; (R)-pantoate from 3-methyl-2-oxobutanoate: step 1/2. Its function is as follows. Catalyzes the reversible reaction in which hydroxymethyl group from 5,10-methylenetetrahydrofolate is transferred onto alpha-ketoisovalerate to form ketopantoate. The polypeptide is 3-methyl-2-oxobutanoate hydroxymethyltransferase (Buchnera aphidicola subsp. Acyrthosiphon pisum (strain APS) (Acyrthosiphon pisum symbiotic bacterium)).